Consider the following 94-residue polypeptide: Acylphosphatase (94 aa).

The Acylphosphatase-like domain maps to 7-94; the sequence is AVQARVYGRV…TAPGDFRIVA (88 aa). Catalysis depends on residues Arg22 and Asn40.

The protein belongs to the acylphosphatase family.

It carries out the reaction an acyl phosphate + H2O = a carboxylate + phosphate + H(+). In Mesorhizobium japonicum (strain LMG 29417 / CECT 9101 / MAFF 303099) (Mesorhizobium loti (strain MAFF 303099)), this protein is Acylphosphatase (acyP).